Consider the following 218-residue polypeptide: Transmembrane gamma-carboxyglutamic acid protein 1 (218 aa).

A propeptide spanning residues 1 to 20 is cleaved from the precursor; that stretch reads MGRIFLTGEKANSVLKRYPR. Positions 20–66 constitute a Gla domain; the sequence is RANGLFEEIRQGNIERECKEEVCTFEEAREAFENNEKTKEFWNTYTK. Residues 21–80 are Extracellular-facing; the sequence is ANGLFEEIRQGNIERECKEEVCTFEEAREAFENNEKTKEFWNTYTKAQQGESNRGSDWFQ. Cysteines 37 and 42 form a disulfide. Residues 81-101 form a helical membrane-spanning segment; sequence FYLTFPLIFGLFIILLVIFLI. Residues 102-218 lie on the Cytoplasmic side of the membrane; the sequence is WRCFLRNKTR…AMVPVATTIK (117 aa). Positions 160–192 are disordered; it reads STRLSNCDPPPTYEEATGQMNLRRSETEPHLDP. The segment covering 182-192 has biased composition (basic and acidic residues); the sequence is RRSETEPHLDP.

In terms of processing, gla residues are produced after subsequent post-translational modifications of glutamate by a vitamin K-dependent gamma-carboxylase.

The protein localises to the membrane. The chain is Transmembrane gamma-carboxyglutamic acid protein 1 (PRRG1) from Bos taurus (Bovine).